The following is a 609-amino-acid chain: UvrABC system protein C (609 aa).

The region spanning 16–94 (HLPGVYRHLD…IKSLRPRYNI (79 aa)) is the GIY-YIG domain. The 36-residue stretch at 203–238 (REVMDEIEARMLQASTELRFEEAAVLRDQMGSLSKV) folds into the UVR domain.

Belongs to the UvrC family. As to quaternary structure, interacts with UvrB in an incision complex.

Its subcellular location is the cytoplasm. In terms of biological role, the UvrABC repair system catalyzes the recognition and processing of DNA lesions. UvrC both incises the 5' and 3' sides of the lesion. The N-terminal half is responsible for the 3' incision and the C-terminal half is responsible for the 5' incision. The polypeptide is UvrABC system protein C (Bordetella pertussis (strain Tohama I / ATCC BAA-589 / NCTC 13251)).